Reading from the N-terminus, the 386-residue chain is Putative 8-amino-7-oxononanoate synthase (386 aa).

R22 serves as a coordination point for substrate. A pyridoxal 5'-phosphate-binding site is contributed by 109–110 (GY). H134 provides a ligand contact to substrate. Residues S182, 207–210 (DEAH), and 238–241 (TLSK) contribute to the pyridoxal 5'-phosphate site. Position 241 is an N6-(pyridoxal phosphate)lysine (K241). Residue T356 participates in substrate binding.

This sequence belongs to the class-II pyridoxal-phosphate-dependent aminotransferase family. BioF subfamily. In terms of assembly, homodimer. Pyridoxal 5'-phosphate is required as a cofactor.

It catalyses the reaction 6-carboxyhexanoyl-[ACP] + L-alanine + H(+) = (8S)-8-amino-7-oxononanoate + holo-[ACP] + CO2. It functions in the pathway cofactor biosynthesis; biotin biosynthesis. Functionally, catalyzes the decarboxylative condensation of pimeloyl-[acyl-carrier protein] and L-alanine to produce 8-amino-7-oxononanoate (AON), [acyl-carrier protein], and carbon dioxide. The chain is Putative 8-amino-7-oxononanoate synthase (bioF) from Nostoc sp. (strain PCC 7120 / SAG 25.82 / UTEX 2576).